A 440-amino-acid chain; its full sequence is Transposon Ty1-ER2 Gag polyprotein (440 aa).

Polar residues-rich tracts occupy residues 1 to 10, 48 to 60, and 127 to 152; these read MESQQLSNYP, TKAN…TPAS, and QSQF…GNTF. Disordered regions lie at residues 1–93, 126–173, and 352–440; these read MESQ…MMTQ, PQSQ…RPPP, and GSRN…PETY. The span at 153-165 shows a compositional bias: low complexity; the sequence is TDSSSADSDMTST. The RNA-binding stretch occupies residues 299 to 401; it reads NNGIHINNKV…NSKSKTARAH (103 aa). Residues 402–418 are compositionally biased toward low complexity; it reads NVSTSNNSPSTDNDSIS. Serine 416 is modified (phosphoserine). Residues 419 to 428 are compositionally biased toward polar residues; the sequence is KSTTEPIQLN. Residues 429 to 440 show a composition bias toward basic and acidic residues; the sequence is NKHDLHLRPETY.

In terms of assembly, homotrimer.

It is found in the cytoplasm. In terms of biological role, capsid protein (CA) is the structural component of the virus-like particle (VLP), forming the shell that encapsulates the retrotransposons dimeric RNA genome. The particles are assembled from trimer-clustered units and there are holes in the capsid shells that allow for the diffusion of macromolecules. CA also has nucleocapsid-like chaperone activity, promoting primer tRNA(i)-Met annealing to the multipartite primer-binding site (PBS), dimerization of Ty1 RNA and initiation of reverse transcription. The chain is Transposon Ty1-ER2 Gag polyprotein (TY1A-ER2) from Saccharomyces cerevisiae (strain ATCC 204508 / S288c) (Baker's yeast).